Consider the following 240-residue polypeptide: 2,3,4,5-tetrahydropyridine-2,6-dicarboxylate N-acetyltransferase (240 aa).

The protein belongs to the transferase hexapeptide repeat family. DapH subfamily.

It catalyses the reaction (S)-2,3,4,5-tetrahydrodipicolinate + acetyl-CoA + H2O = L-2-acetamido-6-oxoheptanedioate + CoA. Its pathway is amino-acid biosynthesis; L-lysine biosynthesis via DAP pathway; LL-2,6-diaminopimelate from (S)-tetrahydrodipicolinate (acetylase route): step 1/3. Functionally, catalyzes the transfer of an acetyl group from acetyl-CoA to tetrahydrodipicolinate. In Bacillus mycoides (strain KBAB4) (Bacillus weihenstephanensis), this protein is 2,3,4,5-tetrahydropyridine-2,6-dicarboxylate N-acetyltransferase.